Reading from the N-terminus, the 963-residue chain is Ubiquitin carboxyl-terminal hydrolase 4 (963 aa).

Residues 11 to 122 form the DUSP domain; the sequence is PDAETQKSEL…GQQPIVRKVV (112 aa). Positions 27–216 are necessary for interaction with SART3; that stretch reads TLQRGAQWYL…LYQGQVLVIE (190 aa). The Nuclear export signal signature appears at 133–141; sequence VEVYLLELK. One can recognise a Ubiquitin-like 1 domain in the interval 142–226; the sequence is LCENSDPTNV…PQNEDGTWPR (85 aa). The disordered stretch occupies residues 219 to 277; that stretch reads NEDGTWPRQTQQSKSSTAPSRNFTTSPKSSASPYSSVSASPIANGDSTNTSGMHSSGVS. The span at 225–243 shows a compositional bias: polar residues; sequence PRQTQQSKSSTAPSRNFTT. A required for USP4 activation by providing conformational flexibility between the DUSP and catalytic domains region spans residues 229 to 295; the sequence is QQSKSSTAPS…SYNCQESPLT (67 aa). A compositionally biased stretch (low complexity) spans 244-261; sequence SPKSSASPYSSVSASPIA. The region spanning 302-923 is the USP domain; it reads CGLGNLGNTC…AAYVLFYQRR (622 aa). The active-site Nucleophile is Cys-311. The regulates ubiquitin dissociation stretch occupies residues 384–386; sequence PQF. The necessary for interaction with RBL2 stretch occupies residues 405 to 407; sequence LHE. Residue Ser-445 is modified to Phosphoserine. Positions 459–463 are necessary for interaction with RB1 and RBL2; sequence LVCPE. Zn(2+) is bound by residues Cys-461 and Cys-464. A Ubiquitin-like 2 domain is found at 483–571; sequence LKKDRVMEIF…IFVYEVCSTS (89 aa). Positions 485 to 775 are interacts with DUSP and ubiquitin-like 1 domains and is required for USP4 activation; it reads KDRVMEIFLV…LQPQKKKKTA (291 aa). The tract at residues 634-701 is disordered; it reads PLPDESGSSP…ATQKKNKGRP (68 aa). Phosphoserine occurs at positions 675 and 680. The Nuclear localization signal motif lies at 767 to 772; that stretch reads QPQKKK. 2 residues coordinate Zn(2+): Cys-799 and Cys-802. His-881 (proton acceptor) is an active-site residue. Positions 930–963 are disordered; the sequence is TPSLSFPGSSDGGARPSSSQQGTGDDETYSMDTN. Acidic residues predominate over residues 953–963; the sequence is GDDETYSMDTN.

This sequence belongs to the peptidase C19 family. USP4 subfamily. Interacts with RB1 (both dephosphorylated and hypophosphorylated forms). Interacts with RBL1 and RBL2. Interacts with ADORA2A (via cytoplasmic C-terminus); the interaction is direct. Interacts with SART3; recruits USP4 to its substrate PRPF3. Phosphorylated at Ser-445 by PKB/AKT1 in response to EGF stimulus, promoting its ability deubiquitinate RHEB. In terms of processing, monoubiquitinated by TRIM21. Ubiquitination does not lead to its proteasomal degradation. Autodeubiquitinated.

It is found in the cytoplasm. The protein localises to the nucleus. The enzyme catalyses Thiol-dependent hydrolysis of ester, thioester, amide, peptide and isopeptide bonds formed by the C-terminal Gly of ubiquitin (a 76-residue protein attached to proteins as an intracellular targeting signal).. With respect to regulation, the completion of the deubiquitinase reaction is mediated by the DUSP and ubiquitin-like 1 domains which promotes the release of ubiquitin from the catalytic site enabling subsequent reactions to occur. In terms of biological role, deubiquitinating enzyme that removes conjugated ubiquitin from target proteins. Deubiquitinates PDPK1. Deubiquitinates TRIM21. Deubiquitinates receptor ADORA2A which increases the amount of functional receptor at the cell surface. Deubiquitinates HAS2. Deubiquitinates RHEB in response to EGF signaling, promoting mTORC1 signaling. May regulate mRNA splicing through deubiquitination of the U4 spliceosomal protein PRPF3. This may prevent its recognition by the U5 component PRPF8 thereby destabilizing interactions within the U4/U6.U5 snRNP. May also play a role in the regulation of quality control in the ER. The chain is Ubiquitin carboxyl-terminal hydrolase 4 (USP4) from Bos taurus (Bovine).